Reading from the N-terminus, the 462-residue chain is BPI fold-containing family B member 2 (462 aa).

An N-terminal signal peptide occupies residues Met1 to Thr22. A Phosphothreonine modification is found at Thr55. At Ser63 the chain carries Phosphoserine. A glycan (N-linked (GlcNAc...) asparagine) is linked at Asn99. A disulfide bond links Cys140 and Cys177. Residues Asn297 and Asn336 are each glycosylated (N-linked (GlcNAc...) asparagine).

It belongs to the BPI/LBP/Plunc superfamily. BPI/LBP family.

It localises to the secreted. The chain is BPI fold-containing family B member 2 (Bpifb2) from Mus musculus (Mouse).